Reading from the N-terminus, the 404-residue chain is Cysteine desulfurase IscS (404 aa).

Residues 75 to 76 (AT), asparagine 155, glutamine 183, and 203 to 205 (SGH) contribute to the pyridoxal 5'-phosphate site. An N6-(pyridoxal phosphate)lysine modification is found at lysine 206. Threonine 243 is a binding site for pyridoxal 5'-phosphate. Cysteine 328 serves as the catalytic Cysteine persulfide intermediate. Residue cysteine 328 participates in [2Fe-2S] cluster binding.

This sequence belongs to the class-V pyridoxal-phosphate-dependent aminotransferase family. NifS/IscS subfamily. As to quaternary structure, homodimer. Forms a heterotetramer with IscU, interacts with other sulfur acceptors. The cofactor is pyridoxal 5'-phosphate.

It localises to the cytoplasm. The enzyme catalyses (sulfur carrier)-H + L-cysteine = (sulfur carrier)-SH + L-alanine. Its pathway is cofactor biosynthesis; iron-sulfur cluster biosynthesis. In terms of biological role, master enzyme that delivers sulfur to a number of partners involved in Fe-S cluster assembly, tRNA modification or cofactor biosynthesis. Catalyzes the removal of elemental sulfur atoms from cysteine to produce alanine. Functions as a sulfur delivery protein for Fe-S cluster synthesis onto IscU, an Fe-S scaffold assembly protein, as well as other S acceptor proteins. The polypeptide is Cysteine desulfurase IscS (Actinobacillus succinogenes (strain ATCC 55618 / DSM 22257 / CCUG 43843 / 130Z)).